Consider the following 244-residue polypeptide: Phosphoadenosine 5'-phosphosulfate reductase (244 aa).

The Nucleophile; cysteine thiosulfonate intermediate role is filled by Cys239.

Belongs to the PAPS reductase family. CysH subfamily.

It localises to the cytoplasm. It catalyses the reaction [thioredoxin]-disulfide + sulfite + adenosine 3',5'-bisphosphate + 2 H(+) = [thioredoxin]-dithiol + 3'-phosphoadenylyl sulfate. The protein operates within sulfur metabolism; hydrogen sulfide biosynthesis; sulfite from sulfate: step 3/3. Catalyzes the formation of sulfite from phosphoadenosine 5'-phosphosulfate (PAPS) using thioredoxin as an electron donor. The polypeptide is Phosphoadenosine 5'-phosphosulfate reductase (Salmonella newport (strain SL254)).